A 129-amino-acid polypeptide reads, in one-letter code: UPF0325 protein HCH_00487 (129 aa).

Belongs to the UPF0325 family.

In Hahella chejuensis (strain KCTC 2396), this protein is UPF0325 protein HCH_00487.